Reading from the N-terminus, the 495-residue chain is MPFLLAIDQGTTSSRAIVFDHEGQPIARAQKDLVQYFPGDGWVEHDATAIWEDSLAVAREALDRADVAAHAISAIGLTNQRETAVLWERASGQPVHNAIVWQDRRTAALCRELKAQGHEALVRRKTGLLIDPYFSATKIGWMLDHDPVLRRRAEAGELAFGTVESWLLYKLTGGAVHASDATNAARTLLFDIRANRWDEDLLALFRIPAALLPRVVDNAGRFGETLPGLFGAPIPITGMAGDQHAAMVGQGCFTRGMIKSTYGTGAFALLNIGQTFVESRNQLLTTLAYRLNGQSTYALEGSIFVAGAAVQWLRDGLRAISSAAETQVLAEAVADTGGCYMVPAFTGLGAPYWDPEARGAILGLTRDTSLEQVARAALEAQGYQTRDLLDAMAADSGTKPLALRVDGGMVANDWVCQFLADITGIAVERPRVIETTALGAAALAGLGAGVFASPADLGGQWHRDRLFTPHMPASRRESLYAGWVQAVRRVASDLR.

T11 contacts ADP. T11, T12, and S13 together coordinate ATP. T11 lines the sn-glycerol 3-phosphate pocket. R15 is a binding site for ADP. The sn-glycerol 3-phosphate site is built by R81, E82, Y133, and D242. 5 residues coordinate glycerol: R81, E82, Y133, D242, and Q243. Residues T264 and G307 each contribute to the ADP site. Residues T264, G307, Q311, and G408 each contribute to the ATP site. Residues G408 and N412 each contribute to the ADP site.

This sequence belongs to the FGGY kinase family.

It catalyses the reaction glycerol + ATP = sn-glycerol 3-phosphate + ADP + H(+). It functions in the pathway polyol metabolism; glycerol degradation via glycerol kinase pathway; sn-glycerol 3-phosphate from glycerol: step 1/1. Inhibited by fructose 1,6-bisphosphate (FBP). Key enzyme in the regulation of glycerol uptake and metabolism. Catalyzes the phosphorylation of glycerol to yield sn-glycerol 3-phosphate. In Rhodospirillum rubrum (strain ATCC 11170 / ATH 1.1.1 / DSM 467 / LMG 4362 / NCIMB 8255 / S1), this protein is Glycerol kinase.